Here is a 450-residue protein sequence, read N- to C-terminus: Histidinol dehydrogenase (450 aa).

3 residues coordinate NAD(+): Tyr-135, Gln-197, and Asn-225. Substrate-binding residues include Thr-248, Gln-270, and His-273. The Zn(2+) site is built by Gln-270 and His-273. Residues Glu-339 and His-340 each act as proton acceptor in the active site. The substrate site is built by His-340, Asp-373, Glu-427, and His-432. Position 373 (Asp-373) interacts with Zn(2+). Residue His-432 participates in Zn(2+) binding.

The protein belongs to the histidinol dehydrogenase family. It depends on Zn(2+) as a cofactor.

It carries out the reaction L-histidinol + 2 NAD(+) + H2O = L-histidine + 2 NADH + 3 H(+). Its pathway is amino-acid biosynthesis; L-histidine biosynthesis; L-histidine from 5-phospho-alpha-D-ribose 1-diphosphate: step 9/9. Its function is as follows. Catalyzes the sequential NAD-dependent oxidations of L-histidinol to L-histidinaldehyde and then to L-histidine. In Corynebacterium jeikeium (strain K411), this protein is Histidinol dehydrogenase.